Here is a 194-residue protein sequence, read N- to C-terminus: MLASGSTARARMLEQAGIAFTVDVAAVDEEAVKHSMAAETRNPARVAEILAELKAVRVSARHPGALVIGADQMLDCDNVWFDKPADRQGARAQLLALRHKTHRLTSAVVAVRDGRRVWHHTEAAKLTMRNFSENFLDGYLDQAGEAVQTSVGAYQLEGLGSQLFLSVEGDFFTILGLPLLALMDFLRENGELVP.

Asp-71 (proton acceptor) is an active-site residue.

This sequence belongs to the Maf family. It depends on a divalent metal cation as a cofactor.

It localises to the cytoplasm. It catalyses the reaction a ribonucleoside 5'-triphosphate + H2O = a ribonucleoside 5'-phosphate + diphosphate + H(+). The catalysed reaction is a 2'-deoxyribonucleoside 5'-triphosphate + H2O = a 2'-deoxyribonucleoside 5'-phosphate + diphosphate + H(+). In terms of biological role, nucleoside triphosphate pyrophosphatase. May have a dual role in cell division arrest and in preventing the incorporation of modified nucleotides into cellular nucleic acids. This is Nucleoside triphosphate pyrophosphatase from Paramagnetospirillum magneticum (strain ATCC 700264 / AMB-1) (Magnetospirillum magneticum).